The sequence spans 222 residues: 2-amino-5-formylamino-6-ribosylaminopyrimidin-4(3H)-one 5'-monophosphate deformylase (222 aa).

Fe cation contacts are provided by glutamate 29, histidine 31, aspartate 40, and histidine 108.

Belongs to the creatininase superfamily. FAPy deformylase family. Homodimer. It depends on Fe(2+) as a cofactor. Zn(2+) serves as cofactor.

The catalysed reaction is 2-amino-5-formylamino-6-(5-phospho-D-ribosylamino)pyrimidin-4(3H)-one + H2O = 2,5-diamino-6-(1-D-ribosylamino)pyrimidin-4(3H)-one 5'-phosphate + formate + H(+). Its pathway is cofactor biosynthesis; coenzyme F420 biosynthesis. It participates in cofactor biosynthesis; riboflavin biosynthesis. Its function is as follows. Catalyzes the hydrolysis of the formamide of 2-amino-5-formylamino-6-ribosylamino-4(3H)-pyrimidinone 5'-monophosphate (FAPy) to form 2,5-diamino-6-ribosylamino-4(3H)-pyrimidinone 5'-phosphate (APy). The chain is 2-amino-5-formylamino-6-ribosylaminopyrimidin-4(3H)-one 5'-monophosphate deformylase from Methanocaldococcus infernus (strain DSM 11812 / JCM 15783 / ME).